Here is a 451-residue protein sequence, read N- to C-terminus: Tubby-like F-box protein 12 (451 aa).

An F-box domain is found at 57-112 (SRWVGLPPELLRDVMKRLEEGESNWPSRKDVVACAAVCRTWREICKDIVQSPEICG). A compositionally biased stretch (low complexity) spans 387–406 (LEQQQQQQQQNHASSSSSAS). Residues 387–407 (LEQQQQQQQQNHASSSSSASD) form a disordered region.

The protein belongs to the TUB family. Ubiquitous.

The sequence is that of Tubby-like F-box protein 12 (TULP12) from Oryza sativa subsp. japonica (Rice).